Reading from the N-terminus, the 305-residue chain is Uridylate cyclase (305 aa).

Residues D58 and D102 each contribute to the Mn(2+) site.

It belongs to the adenylyl cyclase class-4/guanylyl cyclase family. Pyrimidine cyclase subfamily. In terms of assembly, homodimer. Mn(2+) serves as cofactor.

It is found in the cytoplasm. The enzyme catalyses GTP = 3',5'-cyclic GMP + diphosphate. The catalysed reaction is UTP = 3',5'-cyclic UMP + diphosphate. Functionally, pycsar (pyrimidine cyclase system for antiphage resistance) provides immunity against bacteriophage. The pyrimidine cyclase (PycC) synthesizes cyclic nucleotides in response to infection; these serve as specific second messenger signals. The signals activate the adjacent effector, leading to bacterial cell death and abortive phage infection. A clade D Pycsar system. In terms of biological role, the pyrimidine cyclase gene of a two-gene Pycsar system, generates cyclic UMP (cUMP) from UTP as well as cGMP from GTP to a lesser extent, has little to no activity on ATP or CTP. Expression of this and adjacent effector MePycTM (AC A0A1C5G2D0) probably confers resistance to bacteriophage. The genes are probably only expressed in response to bacteriophage infection. The chain is Uridylate cyclase from Micromonospora echinofusca.